The primary structure comprises 178 residues: MEQFHGTTIVSVRRGDKVALGGDGQVTLGNIVMKGGARKVRRIYNNQVLVGFAGGTADAFSLLDRFEAKLEKHQGNLTRAAVELAKDWRTDRMLRRLEAMLIAADATTTLVITGNGDVLDPEGGICAIGSGGAYAQAAARALAENTELSPREIVEKSLEIAGDMCIYTNHNRIIETIE.

The active site involves Thr-7. Na(+)-binding residues include Gly-162, Cys-165, and Thr-168.

The protein belongs to the peptidase T1B family. HslV subfamily. In terms of assembly, a double ring-shaped homohexamer of HslV is capped on each side by a ring-shaped HslU homohexamer. The assembly of the HslU/HslV complex is dependent on binding of ATP.

It localises to the cytoplasm. It carries out the reaction ATP-dependent cleavage of peptide bonds with broad specificity.. With respect to regulation, allosterically activated by HslU binding. Functionally, protease subunit of a proteasome-like degradation complex believed to be a general protein degrading machinery. In Burkholderia ambifaria (strain ATCC BAA-244 / DSM 16087 / CCUG 44356 / LMG 19182 / AMMD) (Burkholderia cepacia (strain AMMD)), this protein is ATP-dependent protease subunit HslV.